We begin with the raw amino-acid sequence, 324 residues long: Probable tRNA pseudouridine synthase B (324 aa).

The Nucleophile role is filled by Asp-72. One can recognise a PUA domain in the interval 239–314 (LPRVVILDSA…LVIETRKVFM (76 aa)).

The protein belongs to the pseudouridine synthase TruB family. Type 2 subfamily.

It catalyses the reaction uridine(55) in tRNA = pseudouridine(55) in tRNA. Could be responsible for synthesis of pseudouridine from uracil-55 in the psi GC loop of transfer RNAs. The chain is Probable tRNA pseudouridine synthase B from Methanothermobacter thermautotrophicus (strain ATCC 29096 / DSM 1053 / JCM 10044 / NBRC 100330 / Delta H) (Methanobacterium thermoautotrophicum).